Here is a 426-residue protein sequence, read N- to C-terminus: Glutamyl-tRNA reductase (426 aa).

Substrate-binding positions include 49-52 (TCNR), Ser-107, 112-114 (EPQ), and Gln-118. Cys-50 (nucleophile) is an active-site residue. Residue 187-192 (GAGETI) coordinates NADP(+).

The protein belongs to the glutamyl-tRNA reductase family. In terms of assembly, homodimer.

The enzyme catalyses (S)-4-amino-5-oxopentanoate + tRNA(Glu) + NADP(+) = L-glutamyl-tRNA(Glu) + NADPH + H(+). Its pathway is porphyrin-containing compound metabolism; protoporphyrin-IX biosynthesis; 5-aminolevulinate from L-glutamyl-tRNA(Glu): step 1/2. In terms of biological role, catalyzes the NADPH-dependent reduction of glutamyl-tRNA(Glu) to glutamate 1-semialdehyde (GSA). This is Glutamyl-tRNA reductase from Ectopseudomonas mendocina (strain ymp) (Pseudomonas mendocina).